The following is a 191-amino-acid chain: Dephospho-CoA kinase (191 aa).

The DPCK domain maps to 3-191; sequence AIGITGSYAS…KLILVIARKL (189 aa). 11-16 contributes to the ATP binding site; the sequence is ASGKTF.

It belongs to the CoaE family.

It is found in the cytoplasm. The catalysed reaction is 3'-dephospho-CoA + ATP = ADP + CoA + H(+). It functions in the pathway cofactor biosynthesis; coenzyme A biosynthesis; CoA from (R)-pantothenate: step 5/5. Its function is as follows. Catalyzes the phosphorylation of the 3'-hydroxyl group of dephosphocoenzyme A to form coenzyme A. The sequence is that of Dephospho-CoA kinase from Rickettsia felis (strain ATCC VR-1525 / URRWXCal2) (Rickettsia azadi).